We begin with the raw amino-acid sequence, 427 residues long: UPF0229 protein YeaH (427 aa).

Over residues Asn-79 to Arg-90 the composition is skewed to basic and acidic residues. Residues Asn-79 to Glu-110 form a disordered region. A compositionally biased stretch (gly residues) spans Gln-92 to Gln-102.

Belongs to the UPF0229 family.

The sequence is that of UPF0229 protein YeaH from Escherichia coli O139:H28 (strain E24377A / ETEC).